We begin with the raw amino-acid sequence, 294 residues long: tRNA-cytidine(32) 2-sulfurtransferase (294 aa).

The PP-loop motif motif lies at 70–75; that stretch reads SGGKDS. [4Fe-4S] cluster contacts are provided by cysteine 145, cysteine 148, and cysteine 236.

It belongs to the TtcA family. As to quaternary structure, homodimer. Requires Mg(2+) as cofactor. It depends on [4Fe-4S] cluster as a cofactor.

The protein resides in the cytoplasm. It catalyses the reaction cytidine(32) in tRNA + S-sulfanyl-L-cysteinyl-[cysteine desulfurase] + AH2 + ATP = 2-thiocytidine(32) in tRNA + L-cysteinyl-[cysteine desulfurase] + A + AMP + diphosphate + H(+). It participates in tRNA modification. In terms of biological role, catalyzes the ATP-dependent 2-thiolation of cytidine in position 32 of tRNA, to form 2-thiocytidine (s(2)C32). The sulfur atoms are provided by the cysteine/cysteine desulfurase (IscS) system. In Rhizobium meliloti (strain 1021) (Ensifer meliloti), this protein is tRNA-cytidine(32) 2-sulfurtransferase.